The sequence spans 573 residues: 2-succinyl-5-enolpyruvyl-6-hydroxy-3-cyclohexene-1-carboxylate synthase (573 aa).

It belongs to the TPP enzyme family. MenD subfamily. As to quaternary structure, homodimer. It depends on Mg(2+) as a cofactor. The cofactor is Mn(2+). Thiamine diphosphate serves as cofactor.

The catalysed reaction is isochorismate + 2-oxoglutarate + H(+) = 5-enolpyruvoyl-6-hydroxy-2-succinyl-cyclohex-3-ene-1-carboxylate + CO2. It functions in the pathway quinol/quinone metabolism; 1,4-dihydroxy-2-naphthoate biosynthesis; 1,4-dihydroxy-2-naphthoate from chorismate: step 2/7. The protein operates within quinol/quinone metabolism; menaquinone biosynthesis. Catalyzes the thiamine diphosphate-dependent decarboxylation of 2-oxoglutarate and the subsequent addition of the resulting succinic semialdehyde-thiamine pyrophosphate anion to isochorismate to yield 2-succinyl-5-enolpyruvyl-6-hydroxy-3-cyclohexene-1-carboxylate (SEPHCHC). This Shewanella sp. (strain ANA-3) protein is 2-succinyl-5-enolpyruvyl-6-hydroxy-3-cyclohexene-1-carboxylate synthase.